The following is a 450-amino-acid chain: 23S rRNA (uracil(1939)-C(5))-methyltransferase RlmD (450 aa).

In terms of domain architecture, TRAM spans 15–73; that stretch reads KAVPAKNLTVTVASLDPFGQGVARHEGKTVFVTGVLPGEQAEVQLTEEKRQFSHAKLKR. [4Fe-4S] cluster contacts are provided by Cys-86, Cys-92, Cys-95, and Cys-173. S-adenosyl-L-methionine contacts are provided by Gln-276, Phe-305, Asn-310, Glu-326, Asn-353, and Asp-374. Cys-400 (nucleophile) is an active-site residue.

The protein belongs to the class I-like SAM-binding methyltransferase superfamily. RNA M5U methyltransferase family. RlmD subfamily.

It carries out the reaction uridine(1939) in 23S rRNA + S-adenosyl-L-methionine = 5-methyluridine(1939) in 23S rRNA + S-adenosyl-L-homocysteine + H(+). In terms of biological role, catalyzes the formation of 5-methyl-uridine at position 1939 (m5U1939) in 23S rRNA. This Pectobacterium atrosepticum (strain SCRI 1043 / ATCC BAA-672) (Erwinia carotovora subsp. atroseptica) protein is 23S rRNA (uracil(1939)-C(5))-methyltransferase RlmD.